Here is a 365-residue protein sequence, read N- to C-terminus: G-protein coupled receptor 4 (365 aa).

Residues M1–G10 lie on the Extracellular side of the membrane. N-linked (GlcNAc...) asparagine glycosylation occurs at N3. Residues C11–Q47 form a helical membrane-spanning segment. 2 cysteine pairs are disulfide-bonded: C11–C260 and C92–C170. At V48–R51 the chain is on the cytoplasmic side. Residues N52–H82 form a helical membrane-spanning segment. The Extracellular segment spans residues D83 to H87. The helical transmembrane segment at G88–H123 threads the bilayer. Residues P124–R131 are Cytoplasmic-facing. The helical transmembrane segment at R132–D158 threads the bilayer. Over E159–F174 the chain is Extracellular. The tract at residues E159–F174 is extracellular loop 2 (ECL2). N-linked (GlcNAc...) asparagine glycosylation occurs at N166. The helical transmembrane segment at P175 to S212 threads the bilayer. At S213 to T216 the chain is on the cytoplasmic side. Residues E217–V252 traverse the membrane as a helical segment. Over Y253–F262 the chain is Extracellular. Residues E263–V291 form a helical membrane-spanning segment. The Cytoplasmic segment spans residues N292–Q365.

Belongs to the G-protein coupled receptor 1 family.

It is found in the cell membrane. Its activity is regulated as follows. Activated by a network of residues that connects an extracellular-facing cavity to Glu-147, a conserved charged residue buried in the transmembrane core of the receptor. Protonation likely drives conformational changes in extracellular loop 2 (ECL2), which stabilizes movement of transmembrane 3 (TM3) and a series of rearrangements that connect the extracellular-facing cavity to Glu-147, a residue only conserved in proton-sensing G-protein coupled receptors. Functionally, proton-sensing G-protein coupled receptor activated by extracellular pH, which is required to monitor pH changes and generate adaptive reactions. Activated by an optimal pH of 6.8-7.2. Ligand binding causes a conformation change that triggers signaling via guanine nucleotide-binding proteins (G proteins) and modulates the activity of downstream effectors, such as adenylate cyclase. GPR4 is mainly coupled to G(s) G proteins and mediates activation of adenylate cyclase activity. May also couple with G(q) and G(12)/G(13) G proteins. Acts as a key regulator of respiratory sensitivity to CO2/H(+) in brain retrotrapezoid nucleus neurons: acts by mediating detection of protons generated by the formation of carbonic acid in the blood, an important mechanism to impulse to breathe. Also acts as a regulator of acid secretion in the kidney collecting duct by maintaining acid-base homeostasis in the kidney. Acidosis-induced GPR4 activation increases paracellular gap formation and permeability of vascular endothelial cells, possibly through the G(12)/G(13)/Rho GTPase signaling pathway. The chain is G-protein coupled receptor 4 from Rattus norvegicus (Rat).